Reading from the N-terminus, the 361-residue chain is FK506-binding protein 39 kDa (361 aa).

The segment at 122–256 (LVDEEDEEEE…PSSPKTRTLK (135 aa)) is disordered. Residues 123-174 (VDEEDEEEEESDEDYDLSPTEEDLVETVSGDEESEEESESEDNSASEEDELD) are compositionally biased toward acidic residues. A Phosphoserine modification is found at Ser192. Basic and acidic residues predominate over residues 208 to 227 (QKVEGTPVKEKKVAFAEKLE). The residue at position 213 (Thr213) is a Phosphothreonine. The segment covering 241 to 252 (QASSNAPSSPKT) has biased composition (polar residues). Ser249 bears the Phosphoserine mark. The PPIase FKBP-type domain occupies 275 to 361 (GKKVEMRYIG…VFEVKLVRVH (87 aa)).

Belongs to the FKBP-type PPIase family. FKBP3/4 subfamily.

It localises to the nucleus. The protein localises to the nucleolus. The catalysed reaction is [protein]-peptidylproline (omega=180) = [protein]-peptidylproline (omega=0). Functionally, PPIase that acts as a histone chaperone. Histone proline isomerase that increases the rate of cis-trans isomerization at prolines on the histone H3 N-terminal tail. Proline isomerization influences H3 methylation thereby regulating gene expression. The chain is FK506-binding protein 39 kDa from Schizosaccharomyces pombe (strain 972 / ATCC 24843) (Fission yeast).